A 763-amino-acid polypeptide reads, in one-letter code: Ethylene receptor 2 (763 aa).

The next 3 membrane-spanning stretches (helical) occupy residues 58–78, 86–106, and 115–135; these read FLIA…ATCS, IVLQ…ITMF, and VVLA…ATAI. Cu cation is bound by residues Cys97 and His101. The GAF domain occupies 190-339; the sequence is DRHTILYTTM…VVADQVAVAL (150 aa). The Histidine kinase domain occupies 382–615; that stretch reads AMYDGMRRPM…TIMLALQFQL (234 aa). In terms of domain architecture, Response regulatory spans 641 to 760; the sequence is QVILVDSDDT…ALGDELYRVL (120 aa). Residue Asp692 is modified to 4-aspartylphosphate.

This sequence belongs to the ethylene receptor family. It depends on Cu cation as a cofactor. Autophosphorylated on serine, threonine and tyrosine residues.

It is found in the endoplasmic reticulum membrane. The catalysed reaction is ATP + protein L-histidine = ADP + protein N-phospho-L-histidine.. In terms of biological role, ethylene receptor related to bacterial two-component regulators. Acts as a negative regulator of ethylene signaling. May delay the transition from the vegetative stage to the floral stage by up-regulating GI (GIGANTEA) and RCN1 and cause starch accumulation in stems by down-regulating the alpha-amylase AMY3D. The protein is Ethylene receptor 2 of Oryza sativa subsp. japonica (Rice).